The primary structure comprises 67 residues: Large ribosomal subunit protein uL29 (67 aa).

The protein belongs to the universal ribosomal protein uL29 family.

The chain is Large ribosomal subunit protein uL29 from Halorhodospira halophila (strain DSM 244 / SL1) (Ectothiorhodospira halophila (strain DSM 244 / SL1)).